Here is a 358-residue protein sequence, read N- to C-terminus: Peptide chain release factor 1 (358 aa).

Q233 carries the N5-methylglutamine modification.

This sequence belongs to the prokaryotic/mitochondrial release factor family. Post-translationally, methylated by PrmC. Methylation increases the termination efficiency of RF1.

The protein resides in the cytoplasm. Functionally, peptide chain release factor 1 directs the termination of translation in response to the peptide chain termination codons UAG and UAA. The protein is Peptide chain release factor 1 of Lachnoclostridium phytofermentans (strain ATCC 700394 / DSM 18823 / ISDg) (Clostridium phytofermentans).